A 214-amino-acid polypeptide reads, in one-letter code: Holliday junction branch migration complex subunit RuvA (214 aa).

Positions 1 to 64 (MITRIRGEML…EDAMTLYGFT (64 aa)) are domain I. The domain II stretch occupies residues 65-143 (SGEQLAVFEL…DITSKDAYQD (79 aa)). The segment at 144 to 160 (ISASEKLDNTGEKLGIS) is flexible linker. The domain III stretch occupies residues 161–214 (TRHKHLDELKAALSSLGYTNREIEKTVDAIQGQITEGQDMEELLRLALQKLNTK).

It belongs to the RuvA family. In terms of assembly, homotetramer. Forms an RuvA(8)-RuvB(12)-Holliday junction (HJ) complex. HJ DNA is sandwiched between 2 RuvA tetramers; dsDNA enters through RuvA and exits via RuvB. An RuvB hexamer assembles on each DNA strand where it exits the tetramer. Each RuvB hexamer is contacted by two RuvA subunits (via domain III) on 2 adjacent RuvB subunits; this complex drives branch migration. In the full resolvosome a probable DNA-RuvA(4)-RuvB(12)-RuvC(2) complex forms which resolves the HJ.

It is found in the cytoplasm. In terms of biological role, the RuvA-RuvB-RuvC complex processes Holliday junction (HJ) DNA during genetic recombination and DNA repair, while the RuvA-RuvB complex plays an important role in the rescue of blocked DNA replication forks via replication fork reversal (RFR). RuvA specifically binds to HJ cruciform DNA, conferring on it an open structure. The RuvB hexamer acts as an ATP-dependent pump, pulling dsDNA into and through the RuvAB complex. HJ branch migration allows RuvC to scan DNA until it finds its consensus sequence, where it cleaves and resolves the cruciform DNA. The chain is Holliday junction branch migration complex subunit RuvA from Natranaerobius thermophilus (strain ATCC BAA-1301 / DSM 18059 / JW/NM-WN-LF).